We begin with the raw amino-acid sequence, 681 residues long: Phosphomethylpyrimidine synthase (681 aa).

Positions 1-13 (MSNNTTSLPAENS) are enriched in polar residues. Residues 1–29 (MSNNTTSLPAENSSHPRKGTPIRKKQREE) form a disordered region. A compositionally biased stretch (basic residues) spans 15–25 (HPRKGTPIRKK). Substrate-binding positions include Asn-254, Met-283, Tyr-312, His-348, 368-370 (SRG), 409-412 (DGLR), and Glu-448. Residue His-452 participates in Zn(2+) binding. Tyr-475 is a substrate binding site. His-516 serves as a coordination point for Zn(2+). [4Fe-4S] cluster contacts are provided by Cys-596, Cys-599, and Cys-604. Basic and acidic residues predominate over residues 658–667 (FRSRGSELYH). The disordered stretch occupies residues 658–681 (FRSRGSELYHRPANLSAEANNEPT).

It belongs to the ThiC family. As to quaternary structure, homodimer. [4Fe-4S] cluster is required as a cofactor.

It carries out the reaction 5-amino-1-(5-phospho-beta-D-ribosyl)imidazole + S-adenosyl-L-methionine = 4-amino-2-methyl-5-(phosphooxymethyl)pyrimidine + CO + 5'-deoxyadenosine + formate + L-methionine + 3 H(+). Its pathway is cofactor biosynthesis; thiamine diphosphate biosynthesis. In terms of biological role, catalyzes the synthesis of the hydroxymethylpyrimidine phosphate (HMP-P) moiety of thiamine from aminoimidazole ribotide (AIR) in a radical S-adenosyl-L-methionine (SAM)-dependent reaction. This Yersinia pseudotuberculosis serotype I (strain IP32953) protein is Phosphomethylpyrimidine synthase.